The sequence spans 83 residues: Delta-conotoxin-like Ac6.1 (83 aa).

The signal sequence occupies residues 1-22; the sequence is MKLTCVVIVAVLFLTAWTFVMA. A propeptide spanning residues 23–51 is cleaved from the precursor; the sequence is DDSRYGLKDLFPKARHEMKNPEASKLNKR. 3 disulfides stabilise this stretch: cysteine 54–cysteine 69, cysteine 61–cysteine 73, and cysteine 68–cysteine 78. 4-hydroxyproline is present on residues proline 57 and proline 65.

It belongs to the conotoxin O1 superfamily. As to expression, expressed by the venom duct.

The protein localises to the secreted. Its function is as follows. Delta-conotoxins bind to site 6 of voltage-gated sodium channels (Nav) and inhibit the inactivation process. The protein is Delta-conotoxin-like Ac6.1 of Conus achatinus (Little frog cone).